The chain runs to 313 residues: Jacalin-related lectin 8 (313 aa).

Residues 1–23 form the signal peptide; it reads MFIIYLFIFLSSAIIDSNGVAMA. Jacalin-type lectin domains lie at 24–163 and 165–309; these read QKIE…YVKT and PTKS…YFSP.

It belongs to the jacalin lectin family.

This chain is Jacalin-related lectin 8 (JAL8), found in Arabidopsis thaliana (Mouse-ear cress).